The following is a 1576-amino-acid chain: Spermatogenesis-associated protein 31D1 (1576 aa).

The helical transmembrane segment at 29–49 (FICLSGLGLFILYLFYVVLTL) threads the bilayer. Disordered stretches follow at residues 170–197 (FTLA…PPPP), 542–572 (HESP…QGQS), 782–801 (KDHL…RSNS), 952–1033 (SQGD…TDFQ), and 1293–1347 (RVSP…PPPE). Over residues 546–565 (VLPPPQPLSLPSTQPLPLPQ) the composition is skewed to pro residues. Over residues 966–980 (RSTFQGEKLGTTSSV) the composition is skewed to polar residues. Over residues 1004-1019 (QFSDTDHDLIETDSKD) the composition is skewed to basic and acidic residues. Residues 1020–1032 (GASTSLRRGTTDF) show a composition bias toward polar residues.

This sequence belongs to the SPATA31 family.

It is found in the membrane. In terms of biological role, may play a role in spermatogenesis. This is Spermatogenesis-associated protein 31D1 (SPATA31D1) from Homo sapiens (Human).